The chain runs to 389 residues: Chalcone synthase (389 aa).

Cys-164 is an active-site residue.

Belongs to the thiolase-like superfamily. Chalcone/stilbene synthases family.

It catalyses the reaction (E)-4-coumaroyl-CoA + 3 malonyl-CoA + 3 H(+) = 2',4,4',6'-tetrahydroxychalcone + 3 CO2 + 4 CoA. Its pathway is secondary metabolite biosynthesis; flavonoid biosynthesis. Functionally, the primary product of this enzyme is 4,2',4',6'-tetrahydroxychalcone (also termed naringenin-chalcone or chalcone) which can under specific conditions spontaneously isomerize into naringenin. This is Chalcone synthase (CHS) from Hydrangea macrophylla (Bigleaf hydrangea).